A 263-amino-acid polypeptide reads, in one-letter code: Endonuclease 8 (263 aa).

Proline 2 functions as the Schiff-base intermediate with DNA in the catalytic mechanism. Catalysis depends on glutamate 3, which acts as the Proton donor. Residue lysine 53 is the Proton donor; for beta-elimination activity of the active site. The DNA site is built by glutamine 70, arginine 125, and asparagine 169. The FPG-type zinc-finger motif lies at 229 to 263 (KVFHRDGEPCERCGGIIEKTTLSSRPFYWCPGCQH). The Proton donor; for delta-elimination activity role is filled by arginine 253.

This sequence belongs to the FPG family. Zn(2+) serves as cofactor.

It carries out the reaction 2'-deoxyribonucleotide-(2'-deoxyribose 5'-phosphate)-2'-deoxyribonucleotide-DNA = a 3'-end 2'-deoxyribonucleotide-(2,3-dehydro-2,3-deoxyribose 5'-phosphate)-DNA + a 5'-end 5'-phospho-2'-deoxyribonucleoside-DNA + H(+). Involved in base excision repair of DNA damaged by oxidation or by mutagenic agents. Acts as a DNA glycosylase that recognizes and removes damaged bases. Has a preference for oxidized pyrimidines, such as thymine glycol, 5,6-dihydrouracil and 5,6-dihydrothymine. Has AP (apurinic/apyrimidinic) lyase activity and introduces nicks in the DNA strand. Cleaves the DNA backbone by beta-delta elimination to generate a single-strand break at the site of the removed base with both 3'- and 5'-phosphates. The protein is Endonuclease 8 of Escherichia coli (strain UTI89 / UPEC).